A 417-amino-acid chain; its full sequence is MLKKTMNIADYDPELFKAIEDETLRQEEHIELIASENYTSPRVMQAQGSQLTNKYAEGYPGKRYYGGCEYVDIVETLAIERAKELFGATFANVQPHSGSQANSAVYMTLLQPGDTVLGMNLAHGGHLTHGSPVNFSGKLYNIIPYGIDETGKIDYDEMERLAVEHKPKMMIGGFSAYSGIVDWARMREIADKIGAYLFVDMAHVAGLVAAGVYPNPVPHAHVVTSTTHKTLAGPRGGIILSAANDEDLYKKLNSAVFPGGQGGPLMHVIAGKAVAFKEALEPEFKVYQQQVVTNAKAMVEVFLERGYKIVSGGTDNHLMLVDLIGRDLTGKEADAALGAANITVNKNSVPNDPRSPFITSGIRIGTPAITRRGFKEAEARELTHWICDVLDNAKDESVIARVKGQVLELCARFPVYG.

Residues Leu121 and 125 to 127 (GHL) each bind (6S)-5,6,7,8-tetrahydrofolate. At Lys229 the chain carries N6-(pyridoxal phosphate)lysine. 355 to 357 (SPF) is a (6S)-5,6,7,8-tetrahydrofolate binding site.

The protein belongs to the SHMT family. As to quaternary structure, homodimer. Pyridoxal 5'-phosphate is required as a cofactor.

The protein resides in the cytoplasm. The enzyme catalyses (6R)-5,10-methylene-5,6,7,8-tetrahydrofolate + glycine + H2O = (6S)-5,6,7,8-tetrahydrofolate + L-serine. Its pathway is one-carbon metabolism; tetrahydrofolate interconversion. It participates in amino-acid biosynthesis; glycine biosynthesis; glycine from L-serine: step 1/1. Its function is as follows. Catalyzes the reversible interconversion of serine and glycine with tetrahydrofolate (THF) serving as the one-carbon carrier. This reaction serves as the major source of one-carbon groups required for the biosynthesis of purines, thymidylate, methionine, and other important biomolecules. Also exhibits THF-independent aldolase activity toward beta-hydroxyamino acids, producing glycine and aldehydes, via a retro-aldol mechanism. The protein is Serine hydroxymethyltransferase of Shewanella amazonensis (strain ATCC BAA-1098 / SB2B).